The chain runs to 824 residues: Cell division cycle protein 27 homolog (824 aa).

4 TPR repeats span residues 6–35 (EPVQ…YAEV), 38–65 (EEAL…KGHS), 67–99 (TTPQ…VFNK), and 115–145 (CFTL…LSLN). Phosphothreonine is present on residues T205, T209, and T244. Residues 287-422 (LETPSPGDGS…TNKGGITQPN (136 aa)) form a disordered region. Phosphoserine is present on S291. Residue T313 is modified to Phosphothreonine. Residues 326–341 (QTGTKSVFSQSGNSRE) show a composition bias toward polar residues. S339 carries the post-translational modification Phosphoserine. Over residues 348 to 361 (QTQSSGPQTSTTPQ) the composition is skewed to low complexity. Polar residues predominate over residues 362-371 (VLSPTITSPP). A Phosphothreonine modification is found at T366. Phosphoserine occurs at positions 379 and 386. The segment covering 380–390 (RLFTSDSSTTK) has biased composition (polar residues). Residues 395 to 413 (KLKMKFPPKIPNRKTKSKT) are compositionally biased toward basic residues. Position 426 is a phosphoserine (S426). T430 carries the phosphothreonine modification. A phosphoserine mark is found at S435 and S438. T446 is modified (phosphothreonine). TPR repeat units follow at residues 465 to 495 (LLRE…PSHH), 499 to 528 (GWVL…VRRI), 533 to 563 (VEGM…TDMD), 567 to 598 (PEAW…QVDP), 601 to 631 (AYAY…IRVN), 635 to 667 (YNAW…INPQ), 670 to 702 (VLLC…DPKN), 704 to 734 (LCKF…QIVP), and 737 to 768 (SLVY…DLDP). The tract at residues 781 to 824 (KRYLPDDEEPITQEEQIMGTDESQESSMTDADDTQLHAAESDEF) is disordered. The residue at position 821 (S821) is a Phosphoserine.

This sequence belongs to the APC3/CDC27 family. Homodimer. The mammalian APC/C is composed at least of 14 distinct subunits ANAPC1, ANAPC2, CDC27/APC3, ANAPC4, ANAPC5, CDC16/APC6, ANAPC7, CDC23/APC8, ANAPC10, ANAPC11, CDC26/APC12, ANAPC13, ANAPC15 and ANAPC16 that assemble into a complex of at least 19 chains with a combined molecular mass of around 1.2 MDa; APC/C interacts with FZR1 and FBXO5. Interacts with RB. Interacts with FAM168B/MANI. Interacts with MCPH1. Post-translationally, phosphorylated. Phosphorylation on Ser-426 and Thr-446 occurs specifically during mitosis.

The protein resides in the nucleus. The protein localises to the cytoplasm. It is found in the cytoskeleton. Its subcellular location is the spindle. It participates in protein modification; protein ubiquitination. Its function is as follows. Component of the anaphase promoting complex/cyclosome (APC/C), a cell cycle-regulated E3 ubiquitin ligase that controls progression through mitosis and the G1 phase of the cell cycle. The APC/C complex acts by mediating ubiquitination and subsequent degradation of target proteins: it mainly mediates the formation of 'Lys-11'-linked polyubiquitin chains and, to a lower extent, the formation of 'Lys-48'- and 'Lys-63'-linked polyubiquitin chains. The APC/C complex catalyzes assembly of branched 'Lys-11'-/'Lys-48'-linked branched ubiquitin chains on target proteins. This is Cell division cycle protein 27 homolog (CDC27) from Homo sapiens (Human).